The chain runs to 294 residues: Glutamyl-Q tRNA(Asp) synthetase (294 aa).

L-glutamate-binding positions include 8–12 and glutamate 44; that span reads RFAPT. The 'HIGH' region motif lies at 11-21; that stretch reads PTPSGYLHFGS. Zn(2+)-binding residues include cysteine 100, cysteine 102, tyrosine 114, and cysteine 118. Residues tyrosine 171 and arginine 189 each contribute to the L-glutamate site. Residues 227–231 carry the 'KMSKS' region motif; that stretch reads KLGKS. Residue lysine 230 coordinates ATP.

The protein belongs to the class-I aminoacyl-tRNA synthetase family. GluQ subfamily. Zn(2+) serves as cofactor.

Its function is as follows. Catalyzes the tRNA-independent activation of glutamate in presence of ATP and the subsequent transfer of glutamate onto a tRNA(Asp). Glutamate is transferred on the 2-amino-5-(4,5-dihydroxy-2-cyclopenten-1-yl) moiety of the queuosine in the wobble position of the QUC anticodon. The chain is Glutamyl-Q tRNA(Asp) synthetase from Ectopseudomonas mendocina (strain ymp) (Pseudomonas mendocina).